A 79-amino-acid polypeptide reads, in one-letter code: Cell division protein ZapB (79 aa).

Positions 4–78 (EVFEKLEAKV…LRALLGKMEE (75 aa)) form a coiled coil.

It belongs to the ZapB family. Homodimer. The ends of the coiled-coil dimer bind to each other, forming polymers. Interacts with FtsZ.

It is found in the cytoplasm. Its function is as follows. Non-essential, abundant cell division factor that is required for proper Z-ring formation. It is recruited early to the divisome by direct interaction with FtsZ, stimulating Z-ring assembly and thereby promoting cell division earlier in the cell cycle. Its recruitment to the Z-ring requires functional FtsA or ZipA. The sequence is that of Cell division protein ZapB from Pectobacterium atrosepticum (strain SCRI 1043 / ATCC BAA-672) (Erwinia carotovora subsp. atroseptica).